Here is a 492-residue protein sequence, read N- to C-terminus: Bifunctional purine biosynthesis protein PurH (492 aa).

The MGS-like domain occupies 1–144 (MKKAILSVSN…KNYKHVTTIV (144 aa)).

Belongs to the PurH family.

It catalyses the reaction (6R)-10-formyltetrahydrofolate + 5-amino-1-(5-phospho-beta-D-ribosyl)imidazole-4-carboxamide = 5-formamido-1-(5-phospho-D-ribosyl)imidazole-4-carboxamide + (6S)-5,6,7,8-tetrahydrofolate. It carries out the reaction IMP + H2O = 5-formamido-1-(5-phospho-D-ribosyl)imidazole-4-carboxamide. It participates in purine metabolism; IMP biosynthesis via de novo pathway; 5-formamido-1-(5-phospho-D-ribosyl)imidazole-4-carboxamide from 5-amino-1-(5-phospho-D-ribosyl)imidazole-4-carboxamide (10-formyl THF route): step 1/1. Its pathway is purine metabolism; IMP biosynthesis via de novo pathway; IMP from 5-formamido-1-(5-phospho-D-ribosyl)imidazole-4-carboxamide: step 1/1. This is Bifunctional purine biosynthesis protein PurH from Staphylococcus aureus (strain MSSA476).